The sequence spans 142 residues: Lutropin subunit beta (142 aa).

An N-terminal signal peptide occupies residues 1–21 (MEMLQGLLLLWLLLNVGGVWT). Disulfide bonds link cysteine 30–cysteine 78, cysteine 44–cysteine 93, cysteine 47–cysteine 131, cysteine 55–cysteine 109, cysteine 59–cysteine 111, and cysteine 114–cysteine 121. Residue asparagine 34 is glycosylated (N-linked (GlcNAc...) asparagine).

The protein belongs to the glycoprotein hormones subunit beta family. As to quaternary structure, heterodimer of a common alpha chain and a unique beta chain which confers biological specificity to thyrotropin, lutropin, follitropin and gonadotropin.

It localises to the secreted. Its function is as follows. Promotes spermatogenesis and ovulation by stimulating the testes and ovaries to synthesize steroids. This Panthera tigris altaica (Siberian tiger) protein is Lutropin subunit beta (LHB).